The sequence spans 1131 residues: PPi-type phosphoenolpyruvate carboxykinase (1131 aa).

It belongs to the PPi-type phosphoenolpyruvate carboxykinase family. As to quaternary structure, monomer and trimer; forms heterotrimers with PEPCK2 and PEPCK3.

It catalyses the reaction oxaloacetate + diphosphate = phosphoenolpyruvate + phosphate + CO2. In terms of biological role, inorganic pyrophosphate (PPi)-dependent phosphoenolpyruvate carboxykinase, which regulates the carbon flow of the central metabolism by fixing CO(2) to phosphoenolpyruvate to produce oxaloacetate. Can also produce pyruvate and diphosphate from phosphoenolpyruvate and phosphate. The chain is PPi-type phosphoenolpyruvate carboxykinase from Propionibacterium freudenreichii subsp. freudenreichii.